The chain runs to 432 residues: Bifunctional protein GlmU (432 aa).

The interval 1-223 (MGKKSIIILA…EENFKGVNSK (223 aa)) is pyrophosphorylase. Residues 9–12 (LAAG), Lys23, Gln75, and 82–83 (GT) contribute to the UDP-N-acetyl-alpha-D-glucosamine site. Asp103 contacts Mg(2+). 4 residues coordinate UDP-N-acetyl-alpha-D-glucosamine: Gly135, Glu149, Asn164, and Asn221. Asn221 is a binding site for Mg(2+). Residues 224-244 (VELADAEVIHQNRIKKEFMKA) are linker. Positions 245 to 432 (GVIMRLPDTI…FYKHFSSKKK (188 aa)) are N-acetyltransferase. UDP-N-acetyl-alpha-D-glucosamine-binding residues include Arg308 and Lys325. The active-site Proton acceptor is His336. 2 residues coordinate UDP-N-acetyl-alpha-D-glucosamine: Tyr339 and Asn350. Residues 359-360 (NY), Ser378, Ala396, and Arg413 each bind acetyl-CoA.

In the N-terminal section; belongs to the N-acetylglucosamine-1-phosphate uridyltransferase family. This sequence in the C-terminal section; belongs to the transferase hexapeptide repeat family. As to quaternary structure, homotrimer. Mg(2+) is required as a cofactor.

It is found in the cytoplasm. It catalyses the reaction alpha-D-glucosamine 1-phosphate + acetyl-CoA = N-acetyl-alpha-D-glucosamine 1-phosphate + CoA + H(+). It carries out the reaction N-acetyl-alpha-D-glucosamine 1-phosphate + UTP + H(+) = UDP-N-acetyl-alpha-D-glucosamine + diphosphate. It participates in nucleotide-sugar biosynthesis; UDP-N-acetyl-alpha-D-glucosamine biosynthesis; N-acetyl-alpha-D-glucosamine 1-phosphate from alpha-D-glucosamine 6-phosphate (route II): step 2/2. It functions in the pathway nucleotide-sugar biosynthesis; UDP-N-acetyl-alpha-D-glucosamine biosynthesis; UDP-N-acetyl-alpha-D-glucosamine from N-acetyl-alpha-D-glucosamine 1-phosphate: step 1/1. The protein operates within bacterial outer membrane biogenesis; LPS lipid A biosynthesis. Its function is as follows. Catalyzes the last two sequential reactions in the de novo biosynthetic pathway for UDP-N-acetylglucosamine (UDP-GlcNAc). The C-terminal domain catalyzes the transfer of acetyl group from acetyl coenzyme A to glucosamine-1-phosphate (GlcN-1-P) to produce N-acetylglucosamine-1-phosphate (GlcNAc-1-P), which is converted into UDP-GlcNAc by the transfer of uridine 5-monophosphate (from uridine 5-triphosphate), a reaction catalyzed by the N-terminal domain. In Aliarcobacter butzleri (strain RM4018) (Arcobacter butzleri), this protein is Bifunctional protein GlmU.